The primary structure comprises 335 residues: DNA-directed RNA polymerases I and III subunit RPAC1 (335 aa).

Position 2 is an N-acetylserine (S2). S17 carries the phosphoserine modification.

This sequence belongs to the archaeal Rpo3/eukaryotic RPB3 RNA polymerase subunit family. Component of the RNA polymerase I (Pol I) complex consisting of 14 subunits: RPA135, RPA190, RPC40, RPA14, RPB5, RPO26, RPA43, RPB8, RPA12, RPB10, RPC19, RPC10, RPA49 and RPA34. The complex is composed of a horseshoe-shaped core containing ten subunits (RPA135, RPA190, RPB5, RPO26, RPB8, RPB10, RPC10, RPA12, RPC19 and RPC40) where RPA135 and RPA190 form the DNA-binding cleft. Outside of the core, RPA14 and RPA43 form the stalk that mediates interactions with transcription initiation factors and newly synthesized RNA. Component of the RNA polymerase III (Pol III) complex consisting of at least 17 subunits. Interacts with the RPC19/RPAC2 and RPC53/RPC4. Interacts with retrotransposons Ty integrase, targeting Ty1, Ty2 and Ty4 integration upstream of pol III-transcribed genes.

It is found in the nucleus. Its subcellular location is the nucleolus. Its function is as follows. DNA-dependent RNA polymerases catalyze the transcription of DNA into RNA using the four ribonucleoside triphosphates as substrates. Common component of RNA polymerases I (Pol I) and III (Pol III) which synthesize ribosomal RNA precursors and small RNAs, such as 5S rRNA and tRNAs, respectively. RPC40 is part of the polymerase core and may function as a clamp element that moves to open and close the cleft. Plays an important role in targeting retrotransposons Ty integration upstream of pol III-transcribed genes such as tRNA genes, allowing Ty1, Ty2 and Ty4 to proliferate and yet minimizing genetic damage. In Saccharomyces cerevisiae (strain ATCC 204508 / S288c) (Baker's yeast), this protein is DNA-directed RNA polymerases I and III subunit RPAC1.